A 377-amino-acid polypeptide reads, in one-letter code: Tyrosine-protein phosphatase 2 (377 aa).

A Tyrosine-protein phosphatase domain is found at 27–347 (IDKEFNFILQ…RFCYLAISEA (321 aa)). The segment at 77–137 (IDDDDDDEDD…EDHGGSGDEG (61 aa)) is disordered. Positions 78–91 (DDDDDDEDDNEDDI) are enriched in acidic residues. Low complexity predominate over residues 92–102 (IVSNNNNNNNN). Positions 113-123 (GSSGQSDVMSN) are enriched in polar residues. The active-site Phosphocysteine intermediate is the C281.

This sequence belongs to the protein-tyrosine phosphatase family. Non-receptor class subfamily.

It catalyses the reaction O-phospho-L-tyrosyl-[protein] + H2O = L-tyrosyl-[protein] + phosphate. The polypeptide is Tyrosine-protein phosphatase 2 (ptpB) (Dictyostelium discoideum (Social amoeba)).